Consider the following 379-residue polypeptide: Ascochitine biosynthesis cluster protein 8 (379 aa).

3 consecutive transmembrane segments (helical) span residues 87 to 107 (ELIA…LDLE), 116 to 136 (VGPV…VAAC), and 141 to 161 (IKVF…VVAL).

Its subcellular location is the membrane. Its pathway is mycotoxin biosynthesis. In terms of biological role, part of the gene cluster that mediates the biosynthesis of the selective antifungal agent ascochitine, an o-quinone methide that plays a possible protective role against other microbial competitors in nature and is considered to be important for pathogenicity of legume-associated Didymella species. The pathway probably begins with the synthesis of a keto-aldehyde intermediate by the ascochitine non-reducing polyketide synthase pksAC from successive condensations of 4 malonyl-CoA units, presumably with a simple acetyl-CoA starter unit. Release of the keto-aldehyde intermediate is consistent with the presence of the C-terminal reductive release domain. The HR-PKS (orf7) probably makes a diketide starter unit which is passed to the non-reducing polyketide synthase pksAC for further extension, producing ascochital and ascochitine. The aldehyde dehydrogenase (orf1), the 2-oxoglutarate-dependent dioxygenase (orf3) and the dehydrogenase (orf9) are probably involved in subsequent oxidations of methyl groups to the carboxylic acid of the heterocyclic ring. The ascochitine gene cluster also includes a gene encoding a short peptide with a cupin domain (orf2) that is often found in secondary metabolite gene clusters and which function has still to be determined. The chain is Ascochitine biosynthesis cluster protein 8 from Didymella fabae (Leaf and pod spot disease fungus).